A 557-amino-acid chain; its full sequence is 2-succinyl-5-enolpyruvyl-6-hydroxy-3-cyclohexene-1-carboxylate synthase (557 aa).

This sequence belongs to the TPP enzyme family. MenD subfamily. As to quaternary structure, homodimer. Mg(2+) is required as a cofactor. Requires Mn(2+) as cofactor. The cofactor is thiamine diphosphate.

It catalyses the reaction isochorismate + 2-oxoglutarate + H(+) = 5-enolpyruvoyl-6-hydroxy-2-succinyl-cyclohex-3-ene-1-carboxylate + CO2. The protein operates within quinol/quinone metabolism; 1,4-dihydroxy-2-naphthoate biosynthesis; 1,4-dihydroxy-2-naphthoate from chorismate: step 2/7. Its pathway is quinol/quinone metabolism; menaquinone biosynthesis. Catalyzes the thiamine diphosphate-dependent decarboxylation of 2-oxoglutarate and the subsequent addition of the resulting succinic semialdehyde-thiamine pyrophosphate anion to isochorismate to yield 2-succinyl-5-enolpyruvyl-6-hydroxy-3-cyclohexene-1-carboxylate (SEPHCHC). The protein is 2-succinyl-5-enolpyruvyl-6-hydroxy-3-cyclohexene-1-carboxylate synthase of Staphylococcus aureus (strain MSSA476).